A 127-amino-acid polypeptide reads, in one-letter code: Small ribosomal subunit protein uS11 (127 aa).

This sequence belongs to the universal ribosomal protein uS11 family. In terms of assembly, part of the 30S ribosomal subunit. Interacts with proteins S7 and S18. Binds to IF-3.

Located on the platform of the 30S subunit, it bridges several disparate RNA helices of the 16S rRNA. Forms part of the Shine-Dalgarno cleft in the 70S ribosome. The sequence is that of Small ribosomal subunit protein uS11 from Chlorobaculum parvum (strain DSM 263 / NCIMB 8327) (Chlorobium vibrioforme subsp. thiosulfatophilum).